We begin with the raw amino-acid sequence, 317 residues long: Cytochrome f (317 aa).

The N-terminal stretch at 1 to 34 (MINFKKQIMKKTTFFLCAMLLVSSILIAPRSSLA) is a signal peptide. Positions 35, 55, 58, and 59 each coordinate heme. The chain crosses the membrane as a helical span at residues 284-304 (IIGLIAFFIGVGLTQILLVLK).

This sequence belongs to the cytochrome f family. As to quaternary structure, the 4 large subunits of the cytochrome b6-f complex are cytochrome b6, subunit IV (17 kDa polypeptide, PetD), cytochrome f and the Rieske protein, while the 4 small subunits are PetG, PetL, PetM and PetN. The complex functions as a dimer. It depends on heme as a cofactor.

The protein localises to the cellular thylakoid membrane. In terms of biological role, component of the cytochrome b6-f complex, which mediates electron transfer between photosystem II (PSII) and photosystem I (PSI), cyclic electron flow around PSI, and state transitions. The sequence is that of Cytochrome f from Prochlorococcus marinus (strain MIT 9515).